The primary structure comprises 78 residues: Small ribosomal subunit protein bS16c (78 aa).

The protein belongs to the bacterial ribosomal protein bS16 family.

The protein localises to the plastid. The protein resides in the chloroplast. In Panax ginseng (Korean ginseng), this protein is Small ribosomal subunit protein bS16c.